A 106-amino-acid polypeptide reads, in one-letter code: UPF0145 protein BH0643 (106 aa).

The protein belongs to the UPF0145 family.

This is UPF0145 protein BH0643 from Halalkalibacterium halodurans (strain ATCC BAA-125 / DSM 18197 / FERM 7344 / JCM 9153 / C-125) (Bacillus halodurans).